Consider the following 411-residue polypeptide: Serine hydroxymethyltransferase (411 aa).

(6S)-5,6,7,8-tetrahydrofolate is bound by residues Leu117 and 121–123 (GHL). At Lys226 the chain carries N6-(pyridoxal phosphate)lysine. Residues Glu241 and 349 to 351 (SPF) each bind (6S)-5,6,7,8-tetrahydrofolate.

The protein belongs to the SHMT family. Homodimer. The cofactor is pyridoxal 5'-phosphate.

The protein localises to the cytoplasm. It carries out the reaction (6R)-5,10-methylene-5,6,7,8-tetrahydrofolate + glycine + H2O = (6S)-5,6,7,8-tetrahydrofolate + L-serine. It functions in the pathway one-carbon metabolism; tetrahydrofolate interconversion. It participates in amino-acid biosynthesis; glycine biosynthesis; glycine from L-serine: step 1/1. Catalyzes the reversible interconversion of serine and glycine with tetrahydrofolate (THF) serving as the one-carbon carrier. This reaction serves as the major source of one-carbon groups required for the biosynthesis of purines, thymidylate, methionine, and other important biomolecules. Also exhibits THF-independent aldolase activity toward beta-hydroxyamino acids, producing glycine and aldehydes, via a retro-aldol mechanism. This chain is Serine hydroxymethyltransferase, found in Macrococcus caseolyticus (strain JCSC5402) (Macrococcoides caseolyticum).